A 334-amino-acid chain; its full sequence is GTP 3',8-cyclase (334 aa).

The Radical SAM core domain occupies 11–236 (GFNRKIDYLR…ESTESSMGPA (226 aa)). Arginine 20 provides a ligand contact to GTP. [4Fe-4S] cluster-binding residues include cysteine 27 and cysteine 31. Tyrosine 33 is an S-adenosyl-L-methionine binding site. Cysteine 34 is a [4Fe-4S] cluster binding site. GTP is bound at residue arginine 69. Glycine 73 contributes to the S-adenosyl-L-methionine binding site. GTP is bound at residue threonine 100. Serine 124 is a binding site for S-adenosyl-L-methionine. Residue lysine 161 participates in GTP binding. Methionine 195 is an S-adenosyl-L-methionine binding site. [4Fe-4S] cluster-binding residues include cysteine 260 and cysteine 263. 265 to 267 (RVR) is a binding site for GTP. Position 277 (cysteine 277) interacts with [4Fe-4S] cluster.

This sequence belongs to the radical SAM superfamily. MoaA family. Monomer and homodimer. It depends on [4Fe-4S] cluster as a cofactor.

The catalysed reaction is GTP + AH2 + S-adenosyl-L-methionine = (8S)-3',8-cyclo-7,8-dihydroguanosine 5'-triphosphate + 5'-deoxyadenosine + L-methionine + A + H(+). It participates in cofactor biosynthesis; molybdopterin biosynthesis. Functionally, catalyzes the cyclization of GTP to (8S)-3',8-cyclo-7,8-dihydroguanosine 5'-triphosphate. The polypeptide is GTP 3',8-cyclase (Pseudomonas putida (strain ATCC 47054 / DSM 6125 / CFBP 8728 / NCIMB 11950 / KT2440)).